Here is a 60-residue protein sequence, read N- to C-terminus: Single-pass membrane and coiled-coil domain-containing protein 4 homolog (60 aa).

Residues M1–N23 form a disordered region. Positions Q8–N23 are enriched in basic and acidic residues. A coiled-coil region spans residues Q8–I33. The helical transmembrane segment at K31 to L51 threads the bilayer.

This sequence belongs to the SMCO4 family.

The protein localises to the membrane. This chain is Single-pass membrane and coiled-coil domain-containing protein 4 homolog, found in Anopheles gambiae (African malaria mosquito).